A 480-amino-acid chain; its full sequence is Immune evasion protein OPG047 (480 aa).

One can recognise a BTB domain in the interval 10 to 90 (CKNILALSMT…SYTGKVYIDS (81 aa)). The BACK domain occupies 125–223 (CVECYMMGIE…NYLSPRGINN (99 aa)). 5 Kelch repeats span residues 273–319 (VVYL…PANN), 320–363 (KLYV…SINN), 365–408 (IYVM…VFGR), 410–447 (LFLVGRNAEFYCESSNTWTLIDDPIYPRDNPELIIVDN), and 448–480 (KLLLIGGFYRESYIDTIEVYNHHTYSWNIWDGK).

The protein belongs to the orthopoxvirus OPG047 family.

Its function is as follows. Might have a role in the suppression of host immune response. This Vaccinia virus (strain Western Reserve) (VACV) protein is Immune evasion protein OPG047 (OPG047).